The sequence spans 453 residues: Bifunctional protein GlmU (453 aa).

The interval 1–226 (MKFSAVILAA…AIEVEGVNDR (226 aa)) is pyrophosphorylase. UDP-N-acetyl-alpha-D-glucosamine-binding positions include 8–11 (LAAG), lysine 22, glutamine 73, 78–79 (GT), 100–102 (YGD), glycine 137, glutamate 151, asparagine 166, and asparagine 224. Residue aspartate 102 participates in Mg(2+) binding. Residue asparagine 224 coordinates Mg(2+). The segment at 227–247 (AQLARLERAFQSMQAQKLLEQ) is linker. Residues 248-453 (GVMLRDPARF…TGWQRPVKQK (206 aa)) are N-acetyltransferase. Arginine 330 and lysine 348 together coordinate UDP-N-acetyl-alpha-D-glucosamine. Catalysis depends on histidine 360, which acts as the Proton acceptor. UDP-N-acetyl-alpha-D-glucosamine contacts are provided by tyrosine 363 and asparagine 374. Acetyl-CoA contacts are provided by residues alanine 377, 383 to 384 (NY), serine 402, alanine 420, and arginine 437.

It in the N-terminal section; belongs to the N-acetylglucosamine-1-phosphate uridyltransferase family. This sequence in the C-terminal section; belongs to the transferase hexapeptide repeat family. In terms of assembly, homotrimer. The cofactor is Mg(2+).

It localises to the cytoplasm. The enzyme catalyses alpha-D-glucosamine 1-phosphate + acetyl-CoA = N-acetyl-alpha-D-glucosamine 1-phosphate + CoA + H(+). The catalysed reaction is N-acetyl-alpha-D-glucosamine 1-phosphate + UTP + H(+) = UDP-N-acetyl-alpha-D-glucosamine + diphosphate. It functions in the pathway nucleotide-sugar biosynthesis; UDP-N-acetyl-alpha-D-glucosamine biosynthesis; N-acetyl-alpha-D-glucosamine 1-phosphate from alpha-D-glucosamine 6-phosphate (route II): step 2/2. The protein operates within nucleotide-sugar biosynthesis; UDP-N-acetyl-alpha-D-glucosamine biosynthesis; UDP-N-acetyl-alpha-D-glucosamine from N-acetyl-alpha-D-glucosamine 1-phosphate: step 1/1. Its pathway is bacterial outer membrane biogenesis; LPS lipid A biosynthesis. Its function is as follows. Catalyzes the last two sequential reactions in the de novo biosynthetic pathway for UDP-N-acetylglucosamine (UDP-GlcNAc). The C-terminal domain catalyzes the transfer of acetyl group from acetyl coenzyme A to glucosamine-1-phosphate (GlcN-1-P) to produce N-acetylglucosamine-1-phosphate (GlcNAc-1-P), which is converted into UDP-GlcNAc by the transfer of uridine 5-monophosphate (from uridine 5-triphosphate), a reaction catalyzed by the N-terminal domain. The sequence is that of Bifunctional protein GlmU from Vibrio campbellii (strain ATCC BAA-1116).